The following is a 313-amino-acid chain: Pseudouridine kinase (313 aa).

This sequence belongs to the carbohydrate kinase PfkB family.

The enzyme catalyses pseudouridine + ATP = psi-UMP + ADP + H(+). Functionally, catalyzes the phosphorylation of pseudouridine to pseudouridine 5'-phosphate (PsiMP). The sequence is that of Pseudouridine kinase (psuK) from Escherichia coli (strain K12).